A 380-amino-acid chain; its full sequence is Flap endonuclease 1-A (380 aa).

Positions 1 to 105 (MGIKGLTKLL…QELAKRYSKR (105 aa)) are N-domain. A Mg(2+)-binding site is contributed by Asp-34. Arg-71 contacts DNA. Mg(2+) contacts are provided by Asp-87, Glu-159, Glu-161, Asp-180, and Asp-182. Positions 123–254 (AIEKFSKRTV…QTALKLIRQH (132 aa)) are I-domain. A DNA-binding site is contributed by Glu-159. Positions 232 and 234 each coordinate DNA. Asp-234 lines the Mg(2+) pocket. Residues 336–344 (SQGRLESFF) are interaction with PCNA. Positions 351-380 (SVPLKRKDTSEKPTKAVANKKTKGAGGKKK) are disordered. Positions 355 to 364 (KRKDTSEKPT) are enriched in basic and acidic residues. A compositionally biased stretch (basic residues) spans 368 to 380 (ANKKTKGAGGKKK).

It belongs to the XPG/RAD2 endonuclease family. FEN1 subfamily. In terms of assembly, interacts with PCNA. Three molecules of FEN1 bind to one PCNA trimer with each molecule binding to one PCNA monomer. PCNA stimulates the nuclease activity without altering cleavage specificity. The cofactor is Mg(2+). In terms of processing, phosphorylated. Phosphorylation upon DNA damage induces relocalization to the nuclear plasma. Strongly expressed in proliferating tissues: root and shoot apical meristem, tiller bud, leaf, ligule primordia, marginal meristem of young leaves and panicles. Not expressed in mature leaves when exposed to UV.

It is found in the nucleus. It localises to the nucleolus. Its subcellular location is the nucleoplasm. The protein resides in the mitochondrion. Its activity is regulated as follows. Inhibited by NaCl. In terms of biological role, structure-specific nuclease with 5'-flap endonuclease and 5'-3' exonuclease activities involved in DNA replication and repair. During DNA replication, cleaves the 5'-overhanging flap structure that is generated by displacement synthesis when DNA polymerase encounters the 5'-end of a downstream Okazaki fragment. It enters the flap from the 5'-end and then tracks to cleave the flap base, leaving a nick for ligation. Also involved in the long patch base excision repair (LP-BER) pathway, by cleaving within the apurinic/apyrimidinic (AP) site-terminated flap. Acts as a genome stabilization factor that prevents flaps from equilibrating into structures that lead to duplications and deletions. Also possesses 5'-3' exonuclease activity on nicked or gapped double-stranded DNA, and exhibits RNase H activity. Also involved in replication and repair of rDNA and in repairing mitochondrial DNA. May be required for cell proliferation. This is Flap endonuclease 1-A from Oryza sativa subsp. japonica (Rice).